The primary structure comprises 315 residues: Aspartate carbamoyltransferase catalytic subunit (315 aa).

Residues arginine 64 and threonine 65 each coordinate carbamoyl phosphate. Lysine 92 is a binding site for L-aspartate. Arginine 114, histidine 142, and glutamine 145 together coordinate carbamoyl phosphate. L-aspartate-binding residues include arginine 175 and arginine 229. Residues glycine 270 and proline 271 each coordinate carbamoyl phosphate.

It belongs to the aspartate/ornithine carbamoyltransferase superfamily. ATCase family. As to quaternary structure, heterododecamer (2C3:3R2) of six catalytic PyrB chains organized as two trimers (C3), and six regulatory PyrI chains organized as three dimers (R2).

It catalyses the reaction carbamoyl phosphate + L-aspartate = N-carbamoyl-L-aspartate + phosphate + H(+). It functions in the pathway pyrimidine metabolism; UMP biosynthesis via de novo pathway; (S)-dihydroorotate from bicarbonate: step 2/3. Its function is as follows. Catalyzes the condensation of carbamoyl phosphate and aspartate to form carbamoyl aspartate and inorganic phosphate, the committed step in the de novo pyrimidine nucleotide biosynthesis pathway. This Xanthobacter autotrophicus (strain ATCC BAA-1158 / Py2) protein is Aspartate carbamoyltransferase catalytic subunit.